A 224-amino-acid chain; its full sequence is CASP-like protein 3A1 (224 aa).

The Cytoplasmic portion of the chain corresponds to M1–H59. A helical membrane pass occupies residues V60–A80. The Extracellular segment spans residues Q81 to E106. Residues Y107–M127 form a helical membrane-spanning segment. At S128–H142 the chain is on the cytoplasmic side. Residues A143 to A163 form a helical membrane-spanning segment. The Extracellular segment spans residues A164–D192. N171 is a glycosylation site (N-linked (GlcNAc...) asparagine). The helical transmembrane segment at H193–V213 threads the bilayer. The Cytoplasmic portion of the chain corresponds to Q214–Y224.

It belongs to the Casparian strip membrane proteins (CASP) family. Homodimer and heterodimers.

The protein resides in the cell membrane. This Populus trichocarpa (Western balsam poplar) protein is CASP-like protein 3A1.